Here is a 162-residue protein sequence, read N- to C-terminus: MTREEKSQVIDFLTAEFKSSLAVVVCDYKGLTHKELETLRKEAKANNTKVQVAKNTLVTVAVKNAELGDIELSGTNIFLWSDDQISACKVADKFASANKEKFAIKSGIIEGQISDASKVNAFAKLPSREELLGMLASVWMGPVRNFTIGLDALRRKKEEEAA.

This sequence belongs to the universal ribosomal protein uL10 family. Part of the ribosomal stalk of the 50S ribosomal subunit. The N-terminus interacts with L11 and the large rRNA to form the base of the stalk. The C-terminus forms an elongated spine to which L12 dimers bind in a sequential fashion forming a multimeric L10(L12)X complex.

Its function is as follows. Forms part of the ribosomal stalk, playing a central role in the interaction of the ribosome with GTP-bound translation factors. The sequence is that of Large ribosomal subunit protein uL10 from Aliarcobacter butzleri (strain RM4018) (Arcobacter butzleri).